Here is a 714-residue protein sequence, read N- to C-terminus: Neutral ceramidase A (714 aa).

Positions 1–23 (MKRSIVFIYSLVILLLSVGFIDA) are cleaved as a signal peptide. Residues Asn218 and Asn246 are each glycosylated (N-linked (GlcNAc...) asparagine). Ser293 acts as the Nucleophile in catalysis. Residues Asn353, Asn373, Asn416, Asn571, Asn610, and Asn700 are each glycosylated (N-linked (GlcNAc...) asparagine).

Belongs to the neutral ceramidase family.

It localises to the secreted. The enzyme catalyses an N-acylsphing-4-enine + H2O = sphing-4-enine + a fatty acid. In terms of biological role, hydrolyzes the sphingolipid ceramide into sphingosine and free fatty acid at an optimal pH of 3.0. Has no activity toward glycosphingolipids, such as GalCer and Galbeta1-3GalNAcbeta1-4(NeuAcalpha2-3)Galbeta1-4Glcbeta1-1'Cer or sphingomyelin. The polypeptide is Neutral ceramidase A (dcd2A) (Dictyostelium discoideum (Social amoeba)).